A 475-amino-acid chain; its full sequence is Dihydrolipoyl dehydrogenase (475 aa).

Residues 39-47 (EKDAYGGTC), K56, and A118 each bind FAD. C47 and C52 form a disulfide bridge. NAD(+) is bound by residues 186–190 (GGGYI), E209, and 275–278 (AVGR). FAD contacts are provided by D318 and A327. The Proton acceptor role is filled by H451.

This sequence belongs to the class-I pyridine nucleotide-disulfide oxidoreductase family. As to quaternary structure, homodimer. It depends on FAD as a cofactor.

Its subcellular location is the cytoplasm. The catalysed reaction is N(6)-[(R)-dihydrolipoyl]-L-lysyl-[protein] + NAD(+) = N(6)-[(R)-lipoyl]-L-lysyl-[protein] + NADH + H(+). The protein is Dihydrolipoyl dehydrogenase (lpdA) of Haloferax volcanii (strain ATCC 29605 / DSM 3757 / JCM 8879 / NBRC 14742 / NCIMB 2012 / VKM B-1768 / DS2) (Halobacterium volcanii).